Reading from the N-terminus, the 78-residue chain is Large ribosomal subunit protein bL28 (78 aa).

The segment at 1–21 is disordered; the sequence is MSRVCQVTGKRPVSGNNRSHA.

This sequence belongs to the bacterial ribosomal protein bL28 family.

The chain is Large ribosomal subunit protein bL28 from Yersinia enterocolitica serotype O:8 / biotype 1B (strain NCTC 13174 / 8081).